We begin with the raw amino-acid sequence, 212 residues long: Large ribosomal subunit protein uL3 (212 aa).

Glutamine 153 bears the N5-methylglutamine mark.

The protein belongs to the universal ribosomal protein uL3 family. Part of the 50S ribosomal subunit. Forms a cluster with proteins L14 and L19. In terms of processing, methylated by PrmB.

One of the primary rRNA binding proteins, it binds directly near the 3'-end of the 23S rRNA, where it nucleates assembly of the 50S subunit. The protein is Large ribosomal subunit protein uL3 of Shewanella sediminis (strain HAW-EB3).